Consider the following 124-residue polypeptide: Phosphoribosyl-ATP pyrophosphatase (124 aa).

This sequence belongs to the PRA-PH family.

It is found in the cytoplasm. The enzyme catalyses 1-(5-phospho-beta-D-ribosyl)-ATP + H2O = 1-(5-phospho-beta-D-ribosyl)-5'-AMP + diphosphate + H(+). It functions in the pathway amino-acid biosynthesis; L-histidine biosynthesis; L-histidine from 5-phospho-alpha-D-ribose 1-diphosphate: step 2/9. This Ralstonia pickettii (strain 12J) protein is Phosphoribosyl-ATP pyrophosphatase.